Consider the following 257-residue polypeptide: Probable endonuclease LCL3 (257 aa).

Residues 39–55 traverse the membrane as a helical segment; it reads VPTAIATTTILAAVQFY. Positions 76–234 constitute a TNase-like domain; it reads RSLFGRVTSV…KLKKLGMWGA (159 aa). Residue Arg-125 is part of the active site. Asp-130 contributes to the Ca(2+) binding site. Catalysis depends on residues Glu-133 and Arg-173. A compositionally biased stretch (basic and acidic residues) spans 236–246; it reads GKFESPRDYKN. The segment at 236–257 is disordered; sequence GKFESPRDYKNRHAATSESKLS.

Belongs to the LCL3 family.

The protein resides in the mitochondrion. It localises to the membrane. This chain is Probable endonuclease LCL3 (LCL3), found in Pyricularia oryzae (strain 70-15 / ATCC MYA-4617 / FGSC 8958) (Rice blast fungus).